The sequence spans 312 residues: Olfactory receptor 2T10 (312 aa).

Residues 1-25 (MRLANQTLGGDFFLLGIFSQISHPG) lie on the Extracellular side of the membrane. Residue N5 is glycosylated (N-linked (GlcNAc...) asparagine). Residues 26–49 (RLCLLIFSIFLMAVSWNITLILLI) traverse the membrane as a helical segment. Topologically, residues 50-57 (HIDSSLHT) are cytoplasmic. The helical transmembrane segment at 58 to 79 (PMYFFINQLSLIDLTYISVTVP) threads the bilayer. Topologically, residues 80-100 (KMLVNQLAKDKTISVLGCGTQ) are extracellular. C97 and C189 are oxidised to a cystine. Residues 101-120 (MYFYLQLGGAECCLLAAMAY) traverse the membrane as a helical segment. Topologically, residues 121 to 139 (DRYVAICHPLRYSVLMSHR) are cytoplasmic. The chain crosses the membrane as a helical span at residues 140 to 158 (VCLLLASGCWFVGSVDGFM). The Extracellular segment spans residues 159 to 195 (LTPIAMSFPFCRSHEIQHFFCEVPAVLKLSCSDTSLY). The helical transmembrane segment at 196–219 (KIFMYLCCVIMLLIPVTVISVSYY) threads the bilayer. Residues 220–236 (YIILTIHKMNSVEGRKK) are Cytoplasmic-facing. The chain crosses the membrane as a helical span at residues 237-259 (AFTTCSSHITVVSLFYGAAIYNY). Over 260–272 (MLPSSYQTPEKDM) the chain is Extracellular. The helical transmembrane segment at 273 to 292 (MSSFFYTILTPVLNPIIYSF) threads the bilayer. At 293-312 (RNKDVTRALKKMLSVQKPPY) the chain is on the cytoplasmic side.

It belongs to the G-protein coupled receptor 1 family.

It is found in the cell membrane. In terms of biological role, odorant receptor. The sequence is that of Olfactory receptor 2T10 (OR2T10) from Homo sapiens (Human).